We begin with the raw amino-acid sequence, 482 residues long: Catalase easC (482 aa).

The active site involves H58. Y347 contributes to the heme binding site.

Belongs to the catalase family. It depends on heme as a cofactor.

It functions in the pathway alkaloid biosynthesis; ergot alkaloid biosynthesis. Catalase; part of the gene cluster that mediates the biosynthesis of fungal ergot alkaloid. DmaW catalyzes the first step of ergot alkaloid biosynthesis by condensing dimethylallyl diphosphate (DMAP) and tryptophan to form 4-dimethylallyl-L-tryptophan. The second step is catalyzed by the methyltransferase easF that methylates 4-dimethylallyl-L-tryptophan in the presence of S-adenosyl-L-methionine, resulting in the formation of 4-dimethylallyl-L-abrine. The catalase easC and the FAD-dependent oxidoreductase easE then transform 4-dimethylallyl-L-abrine to chanoclavine-I which is further oxidized by easD in the presence of NAD(+), resulting in the formation of chanoclavine-I aldehyde. Chanoclavine-I aldehyde is the precursor of ergoamides and ergopeptines in Clavicipitaceae, and clavine-type alcaloids such as fumiclavine in Trichocomaceae. However, the metabolites downstream of chanoclavine-I aldehyde in Arthrodermataceae have not been identified yet. This Arthroderma otae (strain ATCC MYA-4605 / CBS 113480) (Microsporum canis) protein is Catalase easC.